Here is a 183-residue protein sequence, read N- to C-terminus: Apo-citrate lyase phosphoribosyl-dephospho-CoA transferase (183 aa).

Belongs to the CitX family.

It carries out the reaction apo-[citrate lyase ACP] + 2'-(5''-triphospho-alpha-D-ribosyl)-3'-dephospho-CoA = holo-[citrate lyase ACP] + diphosphate. Transfers 2-(5''-triphosphoribosyl)-3'-dephosphocoenzyme-A on a serine residue to the apo-acyl carrier protein (gamma chain) of the citrate lyase to yield holo-acyl carrier protein. In Escherichia coli O7:K1 (strain IAI39 / ExPEC), this protein is Apo-citrate lyase phosphoribosyl-dephospho-CoA transferase.